Consider the following 295-residue polypeptide: Outer surface protein B (295 aa).

Positions Met1–Ala16 are cleaved as a signal peptide. Residue Cys17 is the site of N-palmitoyl cysteine attachment. Cys17 is lipidated: S-diacylglycerol cysteine.

Its subcellular location is the cell outer membrane. The protein is Outer surface protein B (ospB) of Borreliella burgdorferi (Lyme disease spirochete).